The primary structure comprises 392 residues: Galactokinase (392 aa).

37 to 40 (EHTD) serves as a coordination point for substrate. ATP is bound by residues Ser-71 and 128–134 (GAGLSSS). Residues Ser-134 and Glu-166 each coordinate Mg(2+). Residue Asp-178 is the Proton acceptor of the active site. Residue Tyr-228 participates in substrate binding.

It belongs to the GHMP kinase family. GalK subfamily.

It is found in the cytoplasm. It carries out the reaction alpha-D-galactose + ATP = alpha-D-galactose 1-phosphate + ADP + H(+). The protein operates within carbohydrate metabolism; galactose metabolism. In terms of biological role, catalyzes the transfer of the gamma-phosphate of ATP to D-galactose to form alpha-D-galactose-1-phosphate (Gal-1-P). In Streptococcus pneumoniae serotype 4 (strain ATCC BAA-334 / TIGR4), this protein is Galactokinase.